The chain runs to 632 residues: PTS system mannitol-specific EIICBA component (632 aa).

Residues 12-341 form the PTS EIIC type-2 domain; it reads FGRFLSNMIM…ILLKYDFNTI (330 aa). The next 6 membrane-spanning stretches (helical) occupy residues 24-45, 50-70, 134-155, 165-185, 273-292, and 313-334; these read ISIFIAWGMMNALFMPLGWQPN, QLISPMIFYLLPILIGYTGGS, SLAILGILLAIISFFTIGPFIE, IQIILSYNLLPLTSIIIEPAK, LILGGMSGIFILVLLHGGLI, and FSNIISVACSFLVSFISSSILL. Residues 374–469 form the PTS EIIB type-2 domain; the sequence is KTIIVACDAG…KLVENMVFLY (96 aa). Cysteine 380 acts as the Phosphocysteine intermediate; for EIIB activity in catalysis. At cysteine 380 the chain carries Phosphocysteine; by EIIA. One can recognise a PTS EIIA type-2 domain in the interval 488–630; that stretch reads FQLNEENIIL…KEALSLLTME (143 aa). Histidine 548 acts as the Tele-phosphohistidine intermediate; for EIIA activity in catalysis. The residue at position 548 (histidine 548) is a Phosphohistidine; by HPr.

As to quaternary structure, homodimer. An intramolecular phosphotransfer takes places between His-548 and Cys-380.

The protein resides in the cell inner membrane. The catalysed reaction is D-mannitol(out) + N(pros)-phospho-L-histidyl-[protein] = D-mannitol 1-phosphate(in) + L-histidyl-[protein]. Its function is as follows. The phosphoenolpyruvate-dependent sugar phosphotransferase system (sugar PTS), a major carbohydrate active transport system, catalyzes the phosphorylation of incoming sugar substrates concomitantly with their translocation across the cell membrane. This system is involved in D-mannitol transport. The sequence is that of PTS system mannitol-specific EIICBA component (mtlA) from Buchnera aphidicola subsp. Acyrthosiphon pisum (strain APS) (Acyrthosiphon pisum symbiotic bacterium).